A 404-amino-acid chain; its full sequence is Putative replication protein C (404 aa).

The interval Pro249–Arg287 is disordered.

To A.rhizogenes possible replication protein C (RepC).

The polypeptide is Putative replication protein C (Sinorhizobium fredii (strain NBRC 101917 / NGR234)).